A 435-amino-acid chain; its full sequence is Glutamate-1-semialdehyde 2,1-aminomutase (435 aa).

Lysine 266 is modified (N6-(pyridoxal phosphate)lysine).

The protein belongs to the class-III pyridoxal-phosphate-dependent aminotransferase family. HemL subfamily. Homodimer. Pyridoxal 5'-phosphate is required as a cofactor.

The protein resides in the cytoplasm. The catalysed reaction is (S)-4-amino-5-oxopentanoate = 5-aminolevulinate. It participates in porphyrin-containing compound metabolism; protoporphyrin-IX biosynthesis; 5-aminolevulinate from L-glutamyl-tRNA(Glu): step 2/2. This Coxiella burnetii (strain RSA 331 / Henzerling II) protein is Glutamate-1-semialdehyde 2,1-aminomutase.